The following is a 606-amino-acid chain: Diphthine--ammonia ligase (606 aa).

In the N-terminal section; belongs to the Diphthine--ammonia ligase family. This sequence in the C-terminal section; belongs to the RutC family.

It localises to the cytoplasm. The protein localises to the nucleus. It carries out the reaction diphthine-[translation elongation factor 2] + NH4(+) + ATP = diphthamide-[translation elongation factor 2] + AMP + diphosphate + H(+). It participates in protein modification; peptidyl-diphthamide biosynthesis. Its function is as follows. Amidase that catalyzes the last step of diphthamide biosynthesis using ammonium and ATP. Diphthamide biosynthesis consists in the conversion of an L-histidine residue in the translation elongation factor eEF-2 (eft201 or eft202) to diphthamide. Has a role in meiosis. The chain is Diphthine--ammonia ligase (mug71) from Schizosaccharomyces pombe (strain 972 / ATCC 24843) (Fission yeast).